The chain runs to 333 residues: Photosystem II assembly lipoprotein Ycf48 (333 aa).

Positions 1–23 are cleaved as a signal peptide; it reads MNRLLSSAVNLLLVLVLGVGLSG. The N-palmitoyl cysteine moiety is linked to residue Cys24. Cys24 carries S-diacylglycerol cysteine lipidation.

It belongs to the Ycf48 family. Part of early PSII assembly complexes which includes D1 (psbA) and PsbI; not found in mature PSII. Binds to the lumenal side of PSII complexes. Interacts with YidC.

The protein resides in the cellular thylakoid membrane. Functionally, a factor required for optimal assembly of photosystem II (PSII), acting in the early stages of PSII assembly. Also plays a role in replacement of photodamaged D1 (psbA). Assists YidC in synthesis of chlorophyll-binding proteins. In Synechococcus sp. (strain CC9902), this protein is Photosystem II assembly lipoprotein Ycf48.